A 143-amino-acid polypeptide reads, in one-letter code: Large ribosomal subunit protein uL11 (143 aa).

The protein belongs to the universal ribosomal protein uL11 family. As to quaternary structure, part of the ribosomal stalk of the 50S ribosomal subunit. Interacts with L10 and the large rRNA to form the base of the stalk. L10 forms an elongated spine to which L12 dimers bind in a sequential fashion forming a multimeric L10(L12)X complex. Post-translationally, one or more lysine residues are methylated.

Its function is as follows. Forms part of the ribosomal stalk which helps the ribosome interact with GTP-bound translation factors. The polypeptide is Large ribosomal subunit protein uL11 (Kocuria rhizophila (strain ATCC 9341 / DSM 348 / NBRC 103217 / DC2201)).